We begin with the raw amino-acid sequence, 367 residues long: Chorismate synthase (367 aa).

Arg-48 contributes to the NADP(+) binding site. Residues 125–127, Gly-283, 298–302, and Arg-324 each bind FMN; these read RSS and KPTPS.

This sequence belongs to the chorismate synthase family. As to quaternary structure, homotetramer. FMNH2 serves as cofactor.

It carries out the reaction 5-O-(1-carboxyvinyl)-3-phosphoshikimate = chorismate + phosphate. It participates in metabolic intermediate biosynthesis; chorismate biosynthesis; chorismate from D-erythrose 4-phosphate and phosphoenolpyruvate: step 7/7. Catalyzes the anti-1,4-elimination of the C-3 phosphate and the C-6 proR hydrogen from 5-enolpyruvylshikimate-3-phosphate (EPSP) to yield chorismate, which is the branch point compound that serves as the starting substrate for the three terminal pathways of aromatic amino acid biosynthesis. This reaction introduces a second double bond into the aromatic ring system. This is Chorismate synthase from Agathobacter rectalis (strain ATCC 33656 / DSM 3377 / JCM 17463 / KCTC 5835 / VPI 0990) (Eubacterium rectale).